Reading from the N-terminus, the 116-residue chain is Cocaine- and amphetamine-regulated transcript protein (116 aa).

The first 27 residues, 1–27 (MESPRLRLLPLLGAALLLLLPLLGALA), serve as a signal peptide directing secretion. Y41 is subject to Phosphotyrosine. Phosphoserine is present on S48. Cystine bridges form between C82/C100, C88/C108, and C102/C115.

It belongs to the CART family.

Its subcellular location is the secreted. In terms of biological role, satiety factor closely associated with the actions of leptin and neuropeptide y; this anorectic peptide inhibits both normal and starvation-induced feeding and completely blocks the feeding response induced by neuropeptide Y and regulated by leptin in the hypothalamus. In Bos taurus (Bovine), this protein is Cocaine- and amphetamine-regulated transcript protein (CARTPT).